The primary structure comprises 375 residues: Saccharopine dehydrogenase [NAD(+), L-lysine-forming] (375 aa).

L-saccharopine is bound by residues Arg18 and Lys78. The Proton acceptor role is filled by Lys78. The active-site Proton donor is His96. L-saccharopine is bound at residue Gln101. Residue Arg130 coordinates NAD(+). L-saccharopine-binding residues include Arg131 and Phe135. Residues 203–204 (GR), Asp227, Thr231, Tyr252, and Val279 each bind NAD(+). Cys205 and Cys250 are joined by a disulfide. Residue 280 to 282 (SAD) participates in L-saccharopine binding. 322–325 (IDHL) contributes to the NAD(+) binding site.

Belongs to the AlaDH/PNT family. In terms of assembly, monomer.

It carries out the reaction L-saccharopine + NAD(+) + H2O = L-lysine + 2-oxoglutarate + NADH + H(+). It functions in the pathway amino-acid biosynthesis; L-lysine biosynthesis via AAA pathway; L-lysine from L-alpha-aminoadipate (fungal route): step 3/3. In terms of biological role, catalyzes the NAD(+)-dependent cleavage of saccharopine to L-lysine and 2-oxoglutarate, the final step in the alpha-aminoadipate (AAA) pathway for lysin biosynthesis. The sequence is that of Saccharopine dehydrogenase [NAD(+), L-lysine-forming] from Emericella nidulans (strain FGSC A4 / ATCC 38163 / CBS 112.46 / NRRL 194 / M139) (Aspergillus nidulans).